The chain runs to 263 residues: Polyglutamine-binding protein 1 (263 aa).

The 35-residue stretch at 46–80 folds into the WW domain; that stretch reads EGLPPSWYKVFDPSCGLPYYWNVETDLVSWLSPHD. Residues 94 to 263 are disordered; the sequence is NNNADAEDKS…AEASRTKQQD (170 aa). A compositionally biased stretch (basic and acidic residues) spans 99–173; sequence AEDKSDRNLE…DKADREEGKD (75 aa). One copy of the 1-1; approximate repeat lies at 104-110; the sequence is DRNLEKV. A 5 X 7 AA approximate tandem repeats of D-R-[NS]-H-E-K-S region spans residues 104–138; sequence DRNLEKVDRNHEKSDRSHEKPDRSHEKADRNHEKN. The 1-2 repeat unit spans residues 111-117; that stretch reads DRNHEKS. One copy of the 1-3; approximate repeat lies at 118–124; sequence DRSHEKP. The stretch at 125–131 is one 1-4; approximate repeat; it reads DRSHEKA. The stretch at 132-138 is one 1-5; approximate repeat; that stretch reads DRNHEKN. A run of 9 repeats spans residues 139 to 140, 141 to 142, 143 to 144, 150 to 151, 152 to 153, 154 to 155, 156 to 157, 158 to 159, and 160 to 161. A 3 X 2 AA tandem repeats of [DE]-R region spans residues 139–144; that stretch reads DRERER. Positions 150-161 are 6 X 2 AA tandem repeats of [DE]-R; that stretch reads DRERDRDRERER. The interval 243 to 253 is important for interaction with TXNL4A; that stretch reads YPSPGAVLRAN. Ser-245 bears the Phosphoserine mark.

Interacts with POU3F2/Brn-2, ATXN1, TXNL4A, HTT and AR. Interaction with ATXN1 correlates positively with the length of the polyglutamine tract. Interacts with RNA polymerase II large subunit in a phosphorylation-dependent manner. Forms a ternary complex with ATXN1 mutant and phosphorylated RNA polymerase II. Interacts (via C-terminus) with TXNL4A and CD2BP2. Interacts (via WW domain) with ATN1 and SF3B1, and may interact with additional splice factors. Interacts (via WW domain) with WBP11; Leading to reduce interaction between PQBP1 and TXNL4A. Interacts with CAPRIN1. Interacts with DDX1. Interacts with SFPQ. Interacts with KHSRP. In terms of tissue distribution, detected in brain cortex and hippocampus neurons (at protein level). Expressed in brain with high level in cerebellar cortex, hippocampus and olfactory bulb.

Its subcellular location is the nucleus. It is found in the nucleus speckle. The protein localises to the cytoplasmic granule. In terms of biological role, intrinsically disordered protein that acts as a scaffold, and which is involved in different processes, such as pre-mRNA splicing, transcription regulation, innate immunity and neuron development. Interacts with splicing-related factors via the intrinsically disordered region and regulates alternative splicing of target pre-mRNA species. May suppress the ability of POU3F2 to transactivate the DRD1 gene in a POU3F2 dependent manner. Can activate transcription directly or via association with the transcription machinery. May be involved in ATXN1 mutant-induced cell death. The interaction with ATXN1 mutant reduces levels of phosphorylated RNA polymerase II large subunit. Involved in the assembly of cytoplasmic stress granule, possibly by participating in the transport of neuronal RNA granules. Also acts as an innate immune sensor of infection by retroviruses, by detecting the presence of reverse-transcribed DNA in the cytosol. Directly binds retroviral reverse-transcribed DNA in the cytosol and interacts with CGAS, leading to activate the cGAS-STING signaling pathway, triggering type-I interferon production. The protein is Polyglutamine-binding protein 1 (Pqbp1) of Mus musculus (Mouse).